Consider the following 374-residue polypeptide: P2Y purinoceptor 2 (374 aa).

The Extracellular segment spans residues 1-32 (MAAGLDSWNSTINGTWEGDELGYKCRFNEDFK). N-linked (GlcNAc...) asparagine glycosylation is found at Asn-9 and Asn-13. The chain crosses the membrane as a helical span at residues 33-59 (YVLLPVSYGVVCVLGLCLNVVALYIFL). Over 60-70 (CRLKTWNASTT) the chain is Cytoplasmic. Residues 71–93 (YMFHLAVSDSLYAASLPLLVYYY) form a helical membrane-spanning segment. The Extracellular segment spans residues 94–110 (AQGDHWPFSTVLCKLVR). An intrachain disulfide couples Cys-106 to Cys-183. A helical membrane pass occupies residues 111–129 (FLFYTNLYCSILFLTCISV). Residues 130-152 (HRCLGVLRPLHSLSWGHARYARR) are Cytoplasmic-facing. Residues 153–172 (VAAVVWVLVLACQAPVLYFV) traverse the membrane as a helical segment. Residues 173 to 194 (TTSVRGTRITCHDTSARELFSH) lie on the Extracellular side of the membrane. A helical transmembrane segment spans residues 195–220 (FVAYSSVMLGLLFAVPFSIILVCYVL). The Cytoplasmic portion of the chain corresponds to 221–245 (MARRLLKPAYGTTGLPRAKRKSVRT). Residues 246–268 (IALVLAVFALCFLPFHVTRTLYY) form a helical membrane-spanning segment. Topologically, residues 269–286 (SFRSLDLSCHTLNAINMA) are extracellular. Residues 287 to 308 (YKITRPLASANSCLDPVLYFLA) form a helical membrane-spanning segment. At 309–374 (GQRLVRFARD…AGSETKDIRL (66 aa)) the chain is on the cytoplasmic side. Residues 318–374 (DAKPATEPTPSPQARRKLGLHRPNRTDTVRKDLSISSDDSRRTESTPAGSETKDIRL) form a disordered region. Positions 331 to 340 (ARRKLGLHRP) are enriched in basic residues. Over residues 341 to 361 (NRTDTVRKDLSISSDDSRRTE) the composition is skewed to basic and acidic residues.

This sequence belongs to the G-protein coupled receptor 1 family.

The protein localises to the cell membrane. Functionally, receptor for ATP and UTP coupled to G-proteins that activate a phosphatidylinositol-calcium second messenger system. The affinity range is UTP = ATP &gt; ATP-gamma-S &gt;&gt; 2-methylthio-ATP = ADP. The protein is P2Y purinoceptor 2 (P2ry2) of Rattus norvegicus (Rat).